Reading from the N-terminus, the 188-residue chain is dTTP/UTP pyrophosphatase (188 aa).

Asp70 serves as the catalytic Proton acceptor.

Belongs to the Maf family. YhdE subfamily. A divalent metal cation is required as a cofactor.

It is found in the cytoplasm. The enzyme catalyses dTTP + H2O = dTMP + diphosphate + H(+). The catalysed reaction is UTP + H2O = UMP + diphosphate + H(+). Nucleoside triphosphate pyrophosphatase that hydrolyzes dTTP and UTP. May have a dual role in cell division arrest and in preventing the incorporation of modified nucleotides into cellular nucleic acids. The protein is dTTP/UTP pyrophosphatase of Clostridium beijerinckii (strain ATCC 51743 / NCIMB 8052) (Clostridium acetobutylicum).